The primary structure comprises 279 residues: Estrogen receptor beta (279 aa).

Residues 27-261 enclose the NR LBD domain; it reads SPEQLVLTLL…DLLLEMLNAH (235 aa).

The protein belongs to the nuclear hormone receptor family. NR3 subfamily. In terms of assembly, binds DNA as a homodimer. Can form a heterodimer with ESR1. Interacts with NCOA1, NCOA3, NCOA5 and NCOA6 coactivators, leading to a strong increase of transcription of target genes. Interacts with UBE1C and AKAP13. Interacts with DNTTIP2. Interacts with CCDC62 in the presence of estradiol/E2; this interaction seems to enhance the transcription of target genes. Interacts with DNAAF4. Interacts with PRMT2. Interacts with CCAR2 (via N-terminus) in a ligand-independent manner. Interacts with RBM39, in the presence of estradiol (E2). Interacts with STUB1/CHIP.

It localises to the nucleus. Its function is as follows. Nuclear hormone receptor. Binds estrogens with an affinity similar to that of ESR1/ER-alpha, and activates expression of reporter genes containing estrogen response elements (ERE) in an estrogen-dependent manner. The protein is Estrogen receptor beta (ESR2) of Macaca mulatta (Rhesus macaque).